The chain runs to 275 residues: Large ribosomal subunit protein uL2 (275 aa).

Disordered regions lie at residues 38–59 (KKHA…GGHK) and 222–275 (GSAM…RKQK). Basic residues-rich tracts occupy residues 39–59 (KHAG…GGHK) and 254–275 (MGKK…RKQK).

The protein belongs to the universal ribosomal protein uL2 family. In terms of assembly, part of the 50S ribosomal subunit. Forms a bridge to the 30S subunit in the 70S ribosome.

One of the primary rRNA binding proteins. Required for association of the 30S and 50S subunits to form the 70S ribosome, for tRNA binding and peptide bond formation. It has been suggested to have peptidyltransferase activity; this is somewhat controversial. Makes several contacts with the 16S rRNA in the 70S ribosome. This Herpetosiphon aurantiacus (strain ATCC 23779 / DSM 785 / 114-95) protein is Large ribosomal subunit protein uL2.